The following is a 717-amino-acid chain: DNA ligase (717 aa).

Residues 44–48, 93–94, and glutamate 127 each bind NAD(+); these read DADYD and SL. Catalysis depends on lysine 129, which acts as the N6-AMP-lysine intermediate. NAD(+) is bound by residues arginine 150, glutamate 186, lysine 302, and lysine 326. Zn(2+) is bound by residues cysteine 431, cysteine 434, cysteine 455, and cysteine 461. In terms of domain architecture, BRCT spans 639 to 717; the sequence is STDSPVAGKT…EDEWLALIGG (79 aa).

Belongs to the NAD-dependent DNA ligase family. LigA subfamily. The cofactor is Mg(2+). Requires Mn(2+) as cofactor.

The enzyme catalyses NAD(+) + (deoxyribonucleotide)n-3'-hydroxyl + 5'-phospho-(deoxyribonucleotide)m = (deoxyribonucleotide)n+m + AMP + beta-nicotinamide D-nucleotide.. DNA ligase that catalyzes the formation of phosphodiester linkages between 5'-phosphoryl and 3'-hydroxyl groups in double-stranded DNA using NAD as a coenzyme and as the energy source for the reaction. It is essential for DNA replication and repair of damaged DNA. This Sinorhizobium fredii (strain NBRC 101917 / NGR234) protein is DNA ligase.